The following is a 530-amino-acid chain: Arginine--tRNA ligase (530 aa).

Residues 113–123 (ANPTGPLHIGH) carry the 'HIGH' region motif.

This sequence belongs to the class-I aminoacyl-tRNA synthetase family. In terms of assembly, monomer.

It is found in the cytoplasm. It catalyses the reaction tRNA(Arg) + L-arginine + ATP = L-arginyl-tRNA(Arg) + AMP + diphosphate. The chain is Arginine--tRNA ligase from Campylobacter jejuni subsp. doylei (strain ATCC BAA-1458 / RM4099 / 269.97).